Here is a 111-residue protein sequence, read N- to C-terminus: Nucleoid-associated protein lhv_0401 (111 aa).

This sequence belongs to the YbaB/EbfC family. As to quaternary structure, homodimer.

Its subcellular location is the cytoplasm. The protein resides in the nucleoid. Binds to DNA and alters its conformation. May be involved in regulation of gene expression, nucleoid organization and DNA protection. In Lactobacillus helveticus (strain DPC 4571), this protein is Nucleoid-associated protein lhv_0401.